A 343-amino-acid chain; its full sequence is 4-hydroxy-2-oxovalerate aldolase 2 (343 aa).

In terms of domain architecture, Pyruvate carboxyltransferase spans Ile8–Ser260. A substrate-binding site is contributed by Arg16 to Asp17. Mn(2+) is bound at residue Asp17. The active-site Proton acceptor is His20. Residues Ser170 and His199 each contribute to the substrate site. Residues His199 and His201 each contribute to the Mn(2+) site. A substrate-binding site is contributed by Tyr290.

This sequence belongs to the 4-hydroxy-2-oxovalerate aldolase family.

It catalyses the reaction (S)-4-hydroxy-2-oxopentanoate = acetaldehyde + pyruvate. This chain is 4-hydroxy-2-oxovalerate aldolase 2, found in Burkholderia lata (strain ATCC 17760 / DSM 23089 / LMG 22485 / NCIMB 9086 / R18194 / 383).